Here is an 89-residue protein sequence, read N- to C-terminus: Small ribosomal subunit protein uS15 (89 aa).

The protein belongs to the universal ribosomal protein uS15 family. In terms of assembly, part of the 30S ribosomal subunit. Forms a bridge to the 50S subunit in the 70S ribosome, contacting the 23S rRNA.

Its function is as follows. One of the primary rRNA binding proteins, it binds directly to 16S rRNA where it helps nucleate assembly of the platform of the 30S subunit by binding and bridging several RNA helices of the 16S rRNA. Functionally, forms an intersubunit bridge (bridge B4) with the 23S rRNA of the 50S subunit in the ribosome. In Methylobacterium sp. (strain 4-46), this protein is Small ribosomal subunit protein uS15.